The following is a 390-amino-acid chain: 3-ketoacyl-CoA thiolase (390 aa).

The active-site Acyl-thioester intermediate is the Cys-95. Active-site proton acceptor residues include His-346 and Cys-376.

Belongs to the thiolase-like superfamily. Thiolase family. As to quaternary structure, heterotetramer of two alpha chains (FadB) and two beta chains (FadA).

The protein localises to the cytoplasm. The catalysed reaction is an acyl-CoA + acetyl-CoA = a 3-oxoacyl-CoA + CoA. It functions in the pathway lipid metabolism; fatty acid beta-oxidation. Its function is as follows. Catalyzes the final step of fatty acid oxidation in which acetyl-CoA is released and the CoA ester of a fatty acid two carbons shorter is formed. The polypeptide is 3-ketoacyl-CoA thiolase (Psychrobacter arcticus (strain DSM 17307 / VKM B-2377 / 273-4)).